Consider the following 351-residue polypeptide: uncharacterized protein (351 aa).

6 residues coordinate Zn(2+): histidine 23, histidine 25, lysine 151, histidine 184, histidine 212, and aspartate 270. Position 151 is an N6-carboxylysine (lysine 151).

This sequence belongs to the metallo-dependent hydrolases superfamily. Phosphotriesterase family. It depends on Zn(2+) as a cofactor.

This is an uncharacterized protein from Mycoplasma pneumoniae (strain ATCC 29342 / M129 / Subtype 1) (Mycoplasmoides pneumoniae).